The chain runs to 132 residues: Ribosome-binding factor A (132 aa).

Belongs to the RbfA family. In terms of assembly, monomer. Binds 30S ribosomal subunits, but not 50S ribosomal subunits or 70S ribosomes.

It localises to the cytoplasm. Its function is as follows. One of several proteins that assist in the late maturation steps of the functional core of the 30S ribosomal subunit. Associates with free 30S ribosomal subunits (but not with 30S subunits that are part of 70S ribosomes or polysomes). Required for efficient processing of 16S rRNA. May interact with the 5'-terminal helix region of 16S rRNA. This is Ribosome-binding factor A from Xanthomonas campestris pv. campestris (strain 8004).